The sequence spans 298 residues: Bifunctional protein FolD (298 aa).

NADP(+) is bound by residues 166–168 (GRS), Ser191, and Ile232.

It belongs to the tetrahydrofolate dehydrogenase/cyclohydrolase family. As to quaternary structure, homodimer.

The catalysed reaction is (6R)-5,10-methylene-5,6,7,8-tetrahydrofolate + NADP(+) = (6R)-5,10-methenyltetrahydrofolate + NADPH. The enzyme catalyses (6R)-5,10-methenyltetrahydrofolate + H2O = (6R)-10-formyltetrahydrofolate + H(+). It functions in the pathway one-carbon metabolism; tetrahydrofolate interconversion. Catalyzes the oxidation of 5,10-methylenetetrahydrofolate to 5,10-methenyltetrahydrofolate and then the hydrolysis of 5,10-methenyltetrahydrofolate to 10-formyltetrahydrofolate. This Parvibaculum lavamentivorans (strain DS-1 / DSM 13023 / NCIMB 13966) protein is Bifunctional protein FolD.